A 109-amino-acid chain; its full sequence is Toxin YpjF (109 aa).

It belongs to the CbtA/YkfI/YpjF toxin family. In terms of assembly, interacts with FtsZ but not MreB. Another group finds interaction with FtsZ and MreB.

Toxic component of a type IV toxin-antitoxin (TA) system. Acts as a dual toxin inhibitor that blocks cell division and cell elongation in genetically separable interactions with FtsZ and MreB. Overexpression results in inhibition of growth in liquid cultures. Overexpression leads to formation of lemon-shaped cells; inactivated by overexpression of cognate antitoxin YfjZ but not when the 2 genes are coexpressed from the same plasmid. Also neutralized by overexpression of non-cognate antitoxins YafW and CbeA. This is Toxin YpjF (ypjF) from Escherichia coli (strain K12).